Here is a 401-residue protein sequence, read N- to C-terminus: Phosphoglycerate kinase, cytosolic (401 aa).

Residues Val24, Asp25, Asn27, Arg41, Ser63, His64, Gly66, Arg67, Arg122, His154, and Arg155 each contribute to the (2R)-3-phosphoglycerate site. Residue Gly200 participates in ADP binding. Gly200 serves as a coordination point for CDP. AMP contacts are provided by Lys202 and Lys206. Lys206 is a binding site for ATP. Gly224 lines the ADP pocket. Position 224 (Gly224) interacts with CDP. 2 residues coordinate AMP: Gly225 and Gly297. ATP contacts are provided by Gly225 and Gly297. CDP is bound by residues Gly322 and Phe327. Position 327 (Phe327) interacts with ADP. An AMP-binding site is contributed by Glu328. 3 residues coordinate ATP: Glu328, Asp359, and Ser360. Asp359 contributes to the Mg(2+) binding site.

Belongs to the phosphoglycerate kinase family. As to quaternary structure, monomer. Mg(2+) is required as a cofactor.

The protein localises to the cytoplasm. The catalysed reaction is (2R)-3-phosphoglycerate + ATP = (2R)-3-phospho-glyceroyl phosphate + ADP. It functions in the pathway carbohydrate degradation; glycolysis; pyruvate from D-glyceraldehyde 3-phosphate: step 2/5. The chain is Phosphoglycerate kinase, cytosolic from Nicotiana tabacum (Common tobacco).